We begin with the raw amino-acid sequence, 529 residues long: MDQDRSDNTALRRGLRIALRGRRDPLPVAGRRSRTSGGIDDLHTRKVLDLTIRLAEVMLSSGSGTADVVATAQDVAQAYQLTDCVVDITVTTIIVSALATTDTPPVTIMRSVRTRSTDYSRLAELDRLVQRITSGGVAVDQAHEAMDELTERPHPYPRWLATAGAAGFALGVAMLLGGTWLTCVLAAVTSGVIDRLGRLLNRIGTPLFFQRVFGAGIATLVAVAAYLIAGQDPTALVATGIVVLLSGMTLVGSMQDAVTGYMLTALARLGDALFLTAGIVVGILISLRGVTNAGIQIELHVDATTTLATPGMPLPILVAVSGAALSGVCLTIASYAPLRSVATAGLSAGLAELVLIGLGAAGFGRVVATWTAAIGVGFLATLISIRRQAPALVTATAGIMPMLPGLAVFRAVFAFAVNDTPDGGLTQLLEAAATALALGSGVVLGEFLASPLRYGAGRIGDLFRIEGPPGLRRAVGRVVRLQPAKSQQPTGTGGQRWRSVALEPTTADDVDAGYRGDWPATCTSATEVR.

Helical transmembrane passes span Ile-88–Ile-108, Phe-168–Val-188, Val-212–Asp-232, Thr-234–Met-254, Ala-265–Ile-285, Met-312–Ile-332, Ala-344–Gly-364, Arg-365–Ile-385, Ala-389–Phe-409, and Leu-428–Leu-448. Residues Gln-482–Ala-501 are disordered.

This sequence belongs to the ThrE exporter (TC 2.A.79) family.

It localises to the cell membrane. It carries out the reaction L-threonine(in) + H(+)(out) = L-threonine(out) + H(+)(in). Its function is as follows. Catalyzes the export of L-threonine and L-serine from the cell to the extracellular environment. Export is dependent on the proton motive force. Required for in vitro growth and survival of bacteria inside macrophages. Increased expression is associated with low-level amikacin (AMK) resistance. In Mycobacterium tuberculosis (strain ATCC 25618 / H37Rv), this protein is Probable threonine/serine exporter.